Here is a 618-residue protein sequence, read N- to C-terminus: Polyamine transporter TPO5 (618 aa).

Over 1-60 (MPEYTLLADNIRENIVHFDPNGLFDNLHTIVHEDDSQENEEAEHFNYDQVLDKSLLSRGS) the chain is Cytoplasmic. A helical transmembrane segment spans residues 61-84 (IVGLGLGLMSPVLGMCTSMAIGLI). Over 85 to 90 (NGGPLT) the chain is Extracellular. Residues 91-110 (IMLGFLISGVCIWFSSLSLG) form a helical membrane-spanning segment. Residues 111 to 131 (EIVSKFPMELHVGSAMLAPEK) lie on the Cytoplasmic side of the membrane. A helical membrane pass occupies residues 132–148 (LKLVCSWYTGWLMLIGN). Residues 149-154 (WTMSTS) are Extracellular-facing. The chain crosses the membrane as a helical span at residues 155–171 (ITFAGAQLTISLILMTN). The Cytoplasmic segment spans residues 172–179 (SNLISEAH). A helical membrane pass occupies residues 180 to 200 (LIFYTVIVFYLVVTVVGLVNL). The Extracellular segment spans residues 201–211 (KFARFIETINK). Residues 212–231 (VCVYWIIYAIIFIDILLLVF) form a helical membrane-spanning segment. Residues 232-297 (HKGKFRSLKY…EKDIPRGMSN (66 aa)) lie on the Cytoplasmic side of the membrane. Residues 298 to 317 (AVLLSAFSGVIFLIPIMLIL) traverse the membrane as a helical segment. At 318 to 342 (PDNDLLFTNHKVLPIVNIFTKSTDS) the chain is on the extracellular side. A helical membrane pass occupies residues 343-367 (VVLSFFLVLLILGNLLFSGIGSITT). The Cytoplasmic segment spans residues 368-402 (SSRAVYSFSRDQAIPYYDKWTYVEPDSQSKVPKNS). Residues 403–419 (VVLSMIISYFLGLLALI) form a helical membrane-spanning segment. At 420-425 (STAAFN) the chain is on the extracellular side. A helical transmembrane segment spans residues 426 to 449 (AFIGAAVLCLCSATFIPLVLVLFT). Residues 450-464 (RRRAIRSAPVKIRYK) lie on the Cytoplasmic side of the membrane. Residues 465 to 486 (FGWFINIVSIVWLLLSMVSVCL) form a helical membrane-spanning segment. Residues 487 to 498 (PTQVPVTFKTMN) are Extracellular-facing. The helical transmembrane segment at 499–516 (YALMVYVFCILVITGLYF) threads the bilayer. Topologically, residues 517–618 (KWGKYNFRLP…DLADDRRYDI (102 aa)) are cytoplasmic. Residue Ser569 is modified to Phosphoserine. A disordered region spans residues 576–618 (VHPKSSTENPFEENEENVITDYGDEHHTAEQEFDLADDRRYDI). Residues 598–618 (GDEHHTAEQEFDLADDRRYDI) show a composition bias toward basic and acidic residues.

It belongs to the amino acid-polyamine-organocation (APC) superfamily.

Its subcellular location is the golgi apparatus membrane. Its function is as follows. Required for polyamine transport. Transports putrescine effectively and spermidine less effectively. The protein is Polyamine transporter TPO5 (TPO5) of Saccharomyces cerevisiae (strain ATCC 204508 / S288c) (Baker's yeast).